We begin with the raw amino-acid sequence, 362 residues long: Phosphoserine aminotransferase (362 aa).

Arg41 contacts L-glutamate. Residues 75-76 (GS), Phe101, Thr152, Asp173, and Gln196 contribute to the pyridoxal 5'-phosphate site. An N6-(pyridoxal phosphate)lysine modification is found at Lys197. 239-240 (NT) contacts pyridoxal 5'-phosphate.

This sequence belongs to the class-V pyridoxal-phosphate-dependent aminotransferase family. SerC subfamily. Homodimer. Pyridoxal 5'-phosphate is required as a cofactor.

The protein resides in the cytoplasm. It carries out the reaction O-phospho-L-serine + 2-oxoglutarate = 3-phosphooxypyruvate + L-glutamate. The catalysed reaction is 4-(phosphooxy)-L-threonine + 2-oxoglutarate = (R)-3-hydroxy-2-oxo-4-phosphooxybutanoate + L-glutamate. The protein operates within amino-acid biosynthesis; L-serine biosynthesis; L-serine from 3-phospho-D-glycerate: step 2/3. In terms of biological role, catalyzes the reversible conversion of 3-phosphohydroxypyruvate to phosphoserine and of 3-hydroxy-2-oxo-4-phosphonooxybutanoate to phosphohydroxythreonine. This is Phosphoserine aminotransferase from Leuconostoc mesenteroides subsp. mesenteroides (strain ATCC 8293 / DSM 20343 / BCRC 11652 / CCM 1803 / JCM 6124 / NCDO 523 / NBRC 100496 / NCIMB 8023 / NCTC 12954 / NRRL B-1118 / 37Y).